The chain runs to 236 residues: Leucyl/phenylalanyl-tRNA--protein transferase (236 aa).

The protein belongs to the L/F-transferase family.

The protein resides in the cytoplasm. It carries out the reaction N-terminal L-lysyl-[protein] + L-leucyl-tRNA(Leu) = N-terminal L-leucyl-L-lysyl-[protein] + tRNA(Leu) + H(+). The catalysed reaction is N-terminal L-arginyl-[protein] + L-leucyl-tRNA(Leu) = N-terminal L-leucyl-L-arginyl-[protein] + tRNA(Leu) + H(+). The enzyme catalyses L-phenylalanyl-tRNA(Phe) + an N-terminal L-alpha-aminoacyl-[protein] = an N-terminal L-phenylalanyl-L-alpha-aminoacyl-[protein] + tRNA(Phe). In terms of biological role, functions in the N-end rule pathway of protein degradation where it conjugates Leu, Phe and, less efficiently, Met from aminoacyl-tRNAs to the N-termini of proteins containing an N-terminal arginine or lysine. This Shewanella pealeana (strain ATCC 700345 / ANG-SQ1) protein is Leucyl/phenylalanyl-tRNA--protein transferase.